Consider the following 242-residue polypeptide: Biosynthetic peptidoglycan transglycosylase (242 aa).

The helical transmembrane segment at 18–38 (VIMAVLCIAILYQLWMFSLVV) threads the bilayer.

This sequence belongs to the glycosyltransferase 51 family.

The protein localises to the cell inner membrane. The enzyme catalyses [GlcNAc-(1-&gt;4)-Mur2Ac(oyl-L-Ala-gamma-D-Glu-L-Lys-D-Ala-D-Ala)](n)-di-trans,octa-cis-undecaprenyl diphosphate + beta-D-GlcNAc-(1-&gt;4)-Mur2Ac(oyl-L-Ala-gamma-D-Glu-L-Lys-D-Ala-D-Ala)-di-trans,octa-cis-undecaprenyl diphosphate = [GlcNAc-(1-&gt;4)-Mur2Ac(oyl-L-Ala-gamma-D-Glu-L-Lys-D-Ala-D-Ala)](n+1)-di-trans,octa-cis-undecaprenyl diphosphate + di-trans,octa-cis-undecaprenyl diphosphate + H(+). Its pathway is cell wall biogenesis; peptidoglycan biosynthesis. Peptidoglycan polymerase that catalyzes glycan chain elongation from lipid-linked precursors. This is Biosynthetic peptidoglycan transglycosylase from Bordetella bronchiseptica (strain ATCC BAA-588 / NCTC 13252 / RB50) (Alcaligenes bronchisepticus).